Here is a 276-residue protein sequence, read N- to C-terminus: Rhomboid protease GlpG (276 aa).

A run of 6 helical transmembrane segments spans residues 94-114 (GPVT…MQIL), 142-162 (ALMH…WYLG), 169-189 (LGSG…GYVQ), 192-212 (FSGP…GYVW), 229-249 (LIIF…GMSM), and 250-270 (ANGA…VDSL). S201 (nucleophile) is an active-site residue. H254 is a catalytic residue.

This sequence belongs to the peptidase S54 family.

The protein localises to the cell inner membrane. The catalysed reaction is Cleaves type-1 transmembrane domains using a catalytic dyad composed of serine and histidine that are contributed by different transmembrane domains.. In terms of biological role, rhomboid-type serine protease that catalyzes intramembrane proteolysis. This Escherichia coli (strain 55989 / EAEC) protein is Rhomboid protease GlpG.